The following is a 406-amino-acid chain: Lysophospholipid transporter LplT (406 aa).

11 helical membrane-spanning segments follow: residues 16-36, 53-73, 91-111, 139-159, 164-184, 227-247, 253-273, 285-305, 310-330, 349-369, and 372-392; these read MVAV…LLFA, ILQM…GQIA, AGAL…LVGV, MMEA…GILA, MAAL…NLFI, LFWG…PVAL, ATPT…AGAA, CLPA…QNSM, LLLI…NALL, LGEN…VKLG, and VVAV…LLWG.

It belongs to the major facilitator superfamily. LplT (TC 2.A.1.42) family.

The protein resides in the cell inner membrane. Functionally, catalyzes the facilitated diffusion of 2-acyl-glycero-3-phosphoethanolamine (2-acyl-GPE) into the cell. The protein is Lysophospholipid transporter LplT of Yersinia pestis bv. Antiqua (strain Antiqua).